The following is a 271-amino-acid chain: Probable septum site-determining protein MinC (271 aa).

Positions Arg-106–Arg-125 are disordered. Low complexity predominate over residues Ser-110–Ala-119.

Belongs to the MinC family. Interacts with MinD and FtsZ.

Its function is as follows. Cell division inhibitor that blocks the formation of polar Z ring septums. Rapidly oscillates between the poles of the cell to destabilize FtsZ filaments that have formed before they mature into polar Z rings. Prevents FtsZ polymerization. This Burkholderia thailandensis (strain ATCC 700388 / DSM 13276 / CCUG 48851 / CIP 106301 / E264) protein is Probable septum site-determining protein MinC.